A 437-amino-acid polypeptide reads, in one-letter code: Major royal jelly protein 6 (437 aa).

Positions 1–20 (MTNWLLLIVCLSIACQDVTS) are cleaved as a signal peptide. N-linked (GlcNAc...) asparagine glycans are attached at residues asparagine 78, asparagine 164, asparagine 181, asparagine 201, and asparagine 324.

The protein belongs to the major royal jelly protein family. Found in and secreted from the hypopharyngeal glands of the worker honey bee (at protein level); expression peaks at 20 days post eclosion. Expressed in the spermatheca of adult queen bees (at protein level); Expression levels are higher in mated queens than in virgin queens. Expressed at low level in the brains of adult worker bees. Protein abundance does not seem to correlate with transcript abundance.

It localises to the secreted. In terms of biological role, component of royal jelly, a substance produced in the hypopharyngeal gland containing proteins, free amino acids, fatty acids, sugars and other nutrients, which is fed to developing larvae by worker nurse bees. All larvae are fed some royal jelly (also known as worker jelly) early in their development but it forms the principal source of nutrition for larvae destined to become queen bees. Produced in the spermatheca of adult queen bees, along with other major royal jelly proteins, where it may act as a nutrient supply for sperm stored by mated queens, or be involved in energy metabolism. This is Major royal jelly protein 6 from Apis mellifera (Honeybee).